The sequence spans 115 residues: NADH-ubiquinone oxidoreductase chain 3 (115 aa).

3 consecutive transmembrane segments (helical) span residues 3–23 (LPLA…IAFW), 55–75 (FFLV…LLPL), and 86–106 (LMLT…AYEW).

This sequence belongs to the complex I subunit 3 family. In terms of assembly, core subunit of respiratory chain NADH dehydrogenase (Complex I) which is composed of 45 different subunits. Interacts with TMEM186. Interacts with TMEM242.

Its subcellular location is the mitochondrion inner membrane. The catalysed reaction is a ubiquinone + NADH + 5 H(+)(in) = a ubiquinol + NAD(+) + 4 H(+)(out). Functionally, core subunit of the mitochondrial membrane respiratory chain NADH dehydrogenase (Complex I) which catalyzes electron transfer from NADH through the respiratory chain, using ubiquinone as an electron acceptor. Essential for the catalytic activity of complex I. In Lemur catta (Ring-tailed lemur), this protein is NADH-ubiquinone oxidoreductase chain 3.